The primary structure comprises 154 residues: Transcriptional repressor NrdR (154 aa).

A zinc finger spans residues cysteine 3 to cysteine 34. The ATP-cone domain maps to proline 49–alanine 139.

Belongs to the NrdR family. Requires Zn(2+) as cofactor.

Functionally, negatively regulates transcription of bacterial ribonucleotide reductase nrd genes and operons by binding to NrdR-boxes. This chain is Transcriptional repressor NrdR, found in Dechloromonas aromatica (strain RCB).